Consider the following 318-residue polypeptide: Porphobilinogen deaminase (318 aa).

Residue Cys241 is modified to S-(dipyrrolylmethanemethyl)cysteine.

The protein belongs to the HMBS family. Monomer. It depends on dipyrromethane as a cofactor.

The enzyme catalyses 4 porphobilinogen + H2O = hydroxymethylbilane + 4 NH4(+). It functions in the pathway porphyrin-containing compound metabolism; protoporphyrin-IX biosynthesis; coproporphyrinogen-III from 5-aminolevulinate: step 2/4. In terms of biological role, tetrapolymerization of the monopyrrole PBG into the hydroxymethylbilane pre-uroporphyrinogen in several discrete steps. This Citrifermentans bemidjiense (strain ATCC BAA-1014 / DSM 16622 / JCM 12645 / Bem) (Geobacter bemidjiensis) protein is Porphobilinogen deaminase.